The primary structure comprises 549 residues: MTKFVFVTGGVVSSLGKGIAAASLAAILESRGLKVTLLKLDPYINVDPGTMSPFQHGEVFVTEDGAETDLDLGHYERFVSAKMRKSNNFTTGQIYESVIRKERRGEYLGKTVQVIPHITNEIQAFVERGAAASHDGKADVALVEIGGTVGDIESLPFLEAARQMSLRLGRNHCAFVHLTLVPFIASAGELKTKPTQHSVQKLREIGISPTALLCRADRPIPDDERAKISLFANIPQEAVISVWDADSIYKIPQMLNEQGLDRLICEELRLDPKPADLSMWQKLVKAQENPEHEITIGMVGKYVDLTESYKSLIEALRHAGMHTATRVNIEYIDSEELESGHLEVLQPLDAILVPGGFGKRGTEGKIRAIQYARENKVPYLGICLGMQLAVIEFARHVASMGDANSTEFNLDTEHPVVALITEWVDRDGKVEQRSADSDLGGTMRLGAQRVPIKTGTKASQIYGAEVNERHRHRYEVNNHYVPELEKAGMVISARTPTENLPEMMELPESMHPWFVGVQFHPEFTSTPRDGHPLFKAYVEAALAAQRQGA.

The amidoligase domain stretch occupies residues 1–270 (MTKFVFVTGG…DRLICEELRL (270 aa)). Serine 13 is a binding site for CTP. UTP is bound at residue serine 13. Residues 14–19 (SLGKGI) and aspartate 71 contribute to the ATP site. Residues aspartate 71 and glutamate 144 each contribute to the Mg(2+) site. CTP contacts are provided by residues 151–153 (DIE), 191–196 (KTKPTQ), and lysine 227. Residues 191–196 (KTKPTQ) and lysine 227 each bind UTP. Residues 295–547 (TIGMVGKYVD…VEAALAAQRQ (253 aa)) enclose the Glutamine amidotransferase type-1 domain. An L-glutamine-binding site is contributed by glycine 356. Cysteine 383 (nucleophile; for glutamine hydrolysis) is an active-site residue. L-glutamine-binding positions include 384–387 (LGMQ), glutamate 407, and arginine 473. Catalysis depends on residues histidine 520 and glutamate 522.

This sequence belongs to the CTP synthase family. In terms of assembly, homotetramer.

The catalysed reaction is UTP + L-glutamine + ATP + H2O = CTP + L-glutamate + ADP + phosphate + 2 H(+). It catalyses the reaction L-glutamine + H2O = L-glutamate + NH4(+). The enzyme catalyses UTP + NH4(+) + ATP = CTP + ADP + phosphate + 2 H(+). It participates in pyrimidine metabolism; CTP biosynthesis via de novo pathway; CTP from UDP: step 2/2. Allosterically activated by GTP, when glutamine is the substrate; GTP has no effect on the reaction when ammonia is the substrate. The allosteric effector GTP functions by stabilizing the protein conformation that binds the tetrahedral intermediate(s) formed during glutamine hydrolysis. Inhibited by the product CTP, via allosteric rather than competitive inhibition. Its function is as follows. Catalyzes the ATP-dependent amination of UTP to CTP with either L-glutamine or ammonia as the source of nitrogen. Regulates intracellular CTP levels through interactions with the four ribonucleotide triphosphates. The sequence is that of CTP synthase from Cupriavidus metallidurans (strain ATCC 43123 / DSM 2839 / NBRC 102507 / CH34) (Ralstonia metallidurans).